Here is a 342-residue protein sequence, read N- to C-terminus: 4-hydroxythreonine-4-phosphate dehydrogenase (342 aa).

Substrate-binding residues include histidine 139 and threonine 140. Residues histidine 174, histidine 219, and histidine 274 each contribute to the a divalent metal cation site. Substrate is bound by residues lysine 282, asparagine 291, and arginine 300.

It belongs to the PdxA family. As to quaternary structure, homodimer. Requires Zn(2+) as cofactor. It depends on Mg(2+) as a cofactor. The cofactor is Co(2+).

It localises to the cytoplasm. The enzyme catalyses 4-(phosphooxy)-L-threonine + NAD(+) = 3-amino-2-oxopropyl phosphate + CO2 + NADH. It functions in the pathway cofactor biosynthesis; pyridoxine 5'-phosphate biosynthesis; pyridoxine 5'-phosphate from D-erythrose 4-phosphate: step 4/5. Functionally, catalyzes the NAD(P)-dependent oxidation of 4-(phosphooxy)-L-threonine (HTP) into 2-amino-3-oxo-4-(phosphooxy)butyric acid which spontaneously decarboxylates to form 3-amino-2-oxopropyl phosphate (AHAP). This is 4-hydroxythreonine-4-phosphate dehydrogenase from Mesorhizobium japonicum (strain LMG 29417 / CECT 9101 / MAFF 303099) (Mesorhizobium loti (strain MAFF 303099)).